The primary structure comprises 73 residues: Large ribosomal subunit protein uL24 (73 aa).

Positions 51-65 are enriched in basic and acidic residues; it reads DDNPKGGFIHKEKPM. A disordered region spans residues 51 to 73; the sequence is DDNPKGGFIHKEKPMHISNVKKA.

The protein belongs to the universal ribosomal protein uL24 family. Part of the 50S ribosomal subunit.

Its function is as follows. One of two assembly initiator proteins, it binds directly to the 5'-end of the 23S rRNA, where it nucleates assembly of the 50S subunit. Functionally, one of the proteins that surrounds the polypeptide exit tunnel on the outside of the subunit. The polypeptide is Large ribosomal subunit protein uL24 (Helicobacter pylori (strain Shi470)).